We begin with the raw amino-acid sequence, 280 residues long: Thioesterase pynI (280 aa).

Acidic residues predominate over residues 136–145 (LADDSDDEDN). The segment at 136 to 167 (LADDSDDEDNRSDASDASDDGSTMSDEEEEDD) is disordered.

This sequence belongs to the AMT4 thioesterase family.

Its pathway is secondary metabolite biosynthesis. Its function is as follows. Thioesterase; part of the gene cluster that mediates the biosynthesis of pyranonigrins, a family of antioxidative compounds. The first step of pyranonigrins biosynthesis is performed by the hybrid PKS-NRPS synthetase that condenses 6 malonyl-CoA units to an acetyl starter unit, to form a 1,3,5-trioxotetradecane-6,8-dienyl-ACP. The enoyl reductase (ER) domain of pynA is likely to be functional during the first two rounds of polyketide chain extension, to generate the saturated C-C bonds of the alkyl side chain. PynA subsequently forms the amide bond between the acyl chain and L-serine. Although pynA has a terminal reductase domain, it appears to require the thioesterase pynI for the release of the straight-chain intermediate from pynA via the formation of a tetramic acid pyranonigrin J. The methyltransferase pynC then coverts pyranonigrin J to pyranonigrin I via N-methylation. The FAD-dependent monooxygenase pynG catalyzes an epoxidation-mediated cyclization to form the dihydro-gamma-pyrone moiety, followed by pynD-catalyzed oxidation of the alcohol to the ketone and enolization to yield the characteristic tetramic acid-fused gamma-pyrone core of pyranonigrin H. Pyranonigrin H is substrate of pynH for dehydration-mediated exo-methylene formation from the serine side chain to produce pyranonigrin E, before the oxidase pynE reduces the exo-methylene of pyranonigrin E into a pendant methyl to form pyranonigrin G. The FAD-linked oxidoreductase pynB performs the reverse reaction and converts pyranonigrin G back to pyranonigrin E. The sequence is that of Thioesterase pynI from Aspergillus niger (strain ATCC MYA-4892 / CBS 513.88 / FGSC A1513).